A 630-amino-acid chain; its full sequence is MEKLLDRIDSPADLKKLQVSELTKLAEEIRQEMITVLSKCGGHLGPNLGVVELTLALHYVFDVPRDHFVFDVSHQAYVHKLITGRKNRFHTIRQHGGISGFMSREESEYDCYGAGHAGTALSAALGMAVARDRRGGKEHVIALCGDAAFTCGITFEALNNVASTTQRLIVILNDNEWSIDKNVGAIASYFNKIVTNPAYSYLRDRVEKVLEKWPGKNVLKVARKAEEAFKSLLWPSVIFEELGLTYHGPIDGHDIARLISTFEFLKNQEYPVLLHVITQKGRGFPPALEKQKKFHGLGPYNPITGETPSSPRKTFSEVFAETMIKLADMNRNVVAITAAMPNGTALDKFQPKFPDRYFDVGIAEEHAVIFAAGMATKGFKPYCAIYSTFLQRAYDPIIHDVCLQKLPVVFCLDRGGLSGDDGPTHHGLFDVAYLRTVPNITIMHPKDEDELADMLFTAMHHPGPVAIRYPRGSGSGVAVKERPELIPIGRAEVIKHGRDVAIFSLGIMVEMGKELAQKLEECGYSAALINPRTVKPFDRGTLEFFARSVDLIVSIEDHVLAGGFGSLILEELQALGLRIPVVRIGWPDKFIEHGKVDILRKKYGITVENALEQSLKILKHPKSDTNLEIA.

Thiamine diphosphate is bound by residues His-74 and 115–117; that span reads GHA. Asp-146 is a Mg(2+) binding site. Thiamine diphosphate-binding positions include 147–148, Asn-175, Phe-284, and Glu-364; that span reads AA. Residue Asn-175 coordinates Mg(2+).

Belongs to the transketolase family. DXPS subfamily. Homodimer. It depends on Mg(2+) as a cofactor. Requires thiamine diphosphate as cofactor.

It catalyses the reaction D-glyceraldehyde 3-phosphate + pyruvate + H(+) = 1-deoxy-D-xylulose 5-phosphate + CO2. Its pathway is metabolic intermediate biosynthesis; 1-deoxy-D-xylulose 5-phosphate biosynthesis; 1-deoxy-D-xylulose 5-phosphate from D-glyceraldehyde 3-phosphate and pyruvate: step 1/1. Catalyzes the acyloin condensation reaction between C atoms 2 and 3 of pyruvate and glyceraldehyde 3-phosphate to yield 1-deoxy-D-xylulose-5-phosphate (DXP). This chain is 1-deoxy-D-xylulose-5-phosphate synthase, found in Methylacidiphilum infernorum (isolate V4) (Methylokorus infernorum (strain V4)).